The sequence spans 433 residues: Ribulose bisphosphate carboxylase/oxygenase activase, chloroplastic (433 aa).

Residues 1 to 20 are compositionally biased toward polar residues; the sequence is MAAAFSSTVGAPASTPTRSS. The N-terminal 53 residues, 1–53, are a transit peptide targeting the chloroplast; the sequence is MAAAFSSTVGAPASTPTRSSFLGKKLNKPQVSAAVTYHGKSSSSNSRFKAMAA. The disordered stretch occupies residues 1-60; the sequence is MAAAFSSTVGAPASTPTRSSFLGKKLNKPQVSAAVTYHGKSSSSNSRFKAMAAKEVDETK. 161 to 168 provides a ligand contact to ATP; sequence GGKGQGKS.

It belongs to the RuBisCO activase family.

Its subcellular location is the plastid. The protein resides in the chloroplast stroma. In terms of biological role, activation of RuBisCO (ribulose-1,5-bisphosphate carboxylase/oxygenase; EC 4.1.1.39) involves the ATP-dependent carboxylation of the epsilon-amino group of lysine leading to a carbamate structure. The polypeptide is Ribulose bisphosphate carboxylase/oxygenase activase, chloroplastic (RCA1) (Zea mays (Maize)).